A 590-amino-acid chain; its full sequence is KNR4/SMI1 homolog 2 (590 aa).

Disordered regions lie at residues 59-97, 216-239, and 407-590; these read SSSHSLIEGGNNGSRTSLSRNGSSTTVGYRPGLRSSNTN, FQHQQQQQQHQKATSSADASETHG, and TPQR…DVAL. Residues 71–85 are compositionally biased toward polar residues; that stretch reads GSRTSLSRNGSSTTV. The span at 217–226 shows a compositional bias: low complexity; sequence QHQQQQQQHQ. A compositionally biased stretch (polar residues) spans 430-454; the sequence is PSMSGATANTNKSQNPLINMESSSK. Basic and acidic residues-rich tracts occupy residues 470–481 and 489–515; these read PEEPVKKSEVKS and EPEKETKQKDEIIEEKPEVIETPAKED. Positions 516 to 528 are enriched in acidic residues; that stretch reads DKEEEEEEQEEEK. Positions 554–568 are enriched in basic residues; that stretch reads TQKKNQSKKAKKQQQ. Residues 576-590 show a composition bias toward acidic residues; that stretch reads NDVEEVAEDLNDVAL.

The protein belongs to the KNR4/SMI1 family.

This chain is KNR4/SMI1 homolog 2, found in Debaryomyces hansenii (strain ATCC 36239 / CBS 767 / BCRC 21394 / JCM 1990 / NBRC 0083 / IGC 2968) (Yeast).